The primary structure comprises 100 residues: Small ubiquitin-related modifier 1 (100 aa).

Basic and acidic residues predominate over residues 1-12; sequence MSANQEEDKKPG. A disordered region spans residues 1–21; it reads MSANQEEDKKPGDGGAHINLK. The Ubiquitin-like domain occupies 16 to 93; that stretch reads AHINLKVKGQ…IDAMLHQTGG (78 aa). Residue Gly93 forms a Glycyl lysine isopeptide (Gly-Lys) (interchain with K-? in acceptor proteins) linkage.

Belongs to the ubiquitin family. SUMO subfamily. Interacts with SAE2, SCE1, SIZ1 and MMS21. Interacts with HSFA2. Covalently attached to ABI5, FLD, GTE3, HSFA2 and ICE1.

It localises to the nucleus. The protein localises to the cytoplasm. Its function is as follows. Ubiquitin-like protein which can be covalently attached to target lysines as a monomer. Does not seem to be involved in protein degradation and may function as an antagonist of ubiquitin in the degradation process. Required for the massive protein sumoylation in the nucleus induced by heat shock and controlled by SIZ1. Involved in the regulation of the heat stress transcription factor HSFA2 in acquired thermotolerance. The chain is Small ubiquitin-related modifier 1 from Arabidopsis thaliana (Mouse-ear cress).